The following is an 83-amino-acid chain: Large ribosomal subunit protein eL31 (83 aa).

Belongs to the eukaryotic ribosomal protein eL31 family.

The polypeptide is Large ribosomal subunit protein eL31 (Methanococcus aeolicus (strain ATCC BAA-1280 / DSM 17508 / OCM 812 / Nankai-3)).